A 311-amino-acid polypeptide reads, in one-letter code: Malate dehydrogenase (311 aa).

NAD(+) contacts are provided by residues 7–13 (GAAGGIG) and Asp-34. Positions 81 and 87 each coordinate substrate. Residues Asn-94 and 117–119 (ITN) each bind NAD(+). Residues Asn-119 and Arg-153 each contribute to the substrate site. His-177 acts as the Proton acceptor in catalysis. Residue Met-227 coordinates NAD(+).

This sequence belongs to the LDH/MDH superfamily. MDH type 1 family. Homodimer.

The enzyme catalyses (S)-malate + NAD(+) = oxaloacetate + NADH + H(+). Catalyzes the reversible oxidation of malate to oxaloacetate. This is Malate dehydrogenase from Shewanella putrefaciens (strain CN-32 / ATCC BAA-453).